A 332-amino-acid chain; its full sequence is Glyceraldehyde-3-phosphate dehydrogenase (332 aa).

NAD(+) is bound by residues 10-11 (RI), Asp36, Lys81, and Ser116. D-glyceraldehyde 3-phosphate-binding positions include 150-152 (SCT), Thr181, Arg197, 210-211 (TK), and Arg233. Cys151 acts as the Nucleophile in catalysis. Asn314 lines the NAD(+) pocket.

Belongs to the glyceraldehyde-3-phosphate dehydrogenase family. In terms of assembly, homotetramer.

Its subcellular location is the cytoplasm. It catalyses the reaction D-glyceraldehyde 3-phosphate + phosphate + NAD(+) = (2R)-3-phospho-glyceroyl phosphate + NADH + H(+). The protein operates within carbohydrate degradation; glycolysis; pyruvate from D-glyceraldehyde 3-phosphate: step 1/5. Catalyzes the oxidative phosphorylation of glyceraldehyde 3-phosphate (G3P) to 1,3-bisphosphoglycerate (BPG) using the cofactor NAD. The first reaction step involves the formation of a hemiacetal intermediate between G3P and a cysteine residue, and this hemiacetal intermediate is then oxidized to a thioester, with concomitant reduction of NAD to NADH. The reduced NADH is then exchanged with the second NAD, and the thioester is attacked by a nucleophilic inorganic phosphate to produce BPG. The sequence is that of Glyceraldehyde-3-phosphate dehydrogenase (gapA) from Helicobacter pylori (strain J99 / ATCC 700824) (Campylobacter pylori J99).